The primary structure comprises 362 residues: Hepatic sodium/bile acid cotransporter (362 aa).

The Extracellular segment spans residues 1–22 (MEVHNVSAPFNFSLPPGFGHRA). 2 N-linked (GlcNAc...) asparagine glycosylation sites follow: Asn5 and Asn11. A helical membrane pass occupies residues 23 to 44 (TDKALSIILVLMLLLIMLSLGC). Over 45-47 (TME) the chain is Cytoplasmic. The helical transmembrane segment at 48–83 (FSKIKAHLWKPKGVIVALVAQFGIMPLAAFLLGKIF) threads the bilayer. The Extracellular segment spans residues 84–86 (HLS). The discontinuously helical transmembrane segment at 87-112 (NIEALAILICGCSPGGNLSNLFTLAM) threads the bilayer. At 113–115 (KGD) the chain is on the cytoplasmic side. A helical membrane pass occupies residues 116–142 (MNLSIVMTTCSSFSALGMMPLLLYVYS). Residues 143–156 (KGIYDGDLKDKVPY) lie on the Extracellular side of the membrane. Residues 157–179 (KGIMISLVIVLIPCTIGIVLKSK) form a helical membrane-spanning segment. Residues 180–183 (RPHY) lie on the Cytoplasmic side of the membrane. The helical transmembrane segment at 184-217 (VPYILKGGMIITFLLSVAVTALSVINVGNSIMFV) threads the bilayer. Topologically, residues 218–219 (MT) are extracellular. The chain crosses the membrane as a helical span at residues 220 to 243 (PHLLATSSLMPFSGFLMGYILSAL). Residues 244–247 (FQLN) lie on the Cytoplasmic side of the membrane. The chain crosses the membrane as a discontinuously helical span at residues 248–273 (PSCRRTISMETGFQNIQLCSTILNVT). At 274–280 (FPPEVIG) the chain is on the extracellular side. Residues 281–311 (PLFFFPLLYMIFQLAEGLLIIIIFRCYEKIK) traverse the membrane as a helical segment. Residues 312 to 362 (PPKDQTKITYKAAATEDATPAALEKGTHNGNIPPLQPGPSPNGLNSGQMAN) are Cytoplasmic-facing. The residue at position 330 (Thr330) is a Phosphothreonine. The disordered stretch occupies residues 333 to 362 (ALEKGTHNGNIPPLQPGPSPNGLNSGQMAN). Polar residues predominate over residues 353–362 (NGLNSGQMAN).

Belongs to the bile acid:sodium symporter (BASS) (TC 2.A.28) family. As to expression, highly expressed in liver and low expression in kidney.

The protein localises to the cell membrane. The catalysed reaction is taurocholate(out) + 2 Na(+)(out) = taurocholate(in) + 2 Na(+)(in). It catalyses the reaction taurochenodeoxycholate(out) + 2 Na(+)(out) = taurochenodeoxycholate(in) + 2 Na(+)(in). The enzyme catalyses tauroursodeoxycholate(out) + 2 Na(+)(out) = tauroursodeoxycholate(in) + 2 Na(+)(in). It carries out the reaction glycocholate(out) + 2 Na(+)(out) = glycocholate(in) + 2 Na(+)(in). The catalysed reaction is estrone 3-sulfate(out) + 2 Na(+)(out) = estrone 3-sulfate(in) + 2 Na(+)(in). It catalyses the reaction cholate(out) + 2 Na(+)(out) = cholate(in) + 2 Na(+)(in). The enzyme catalyses tauronorcholate(out) + 2 Na(+)(out) = tauronorcholate(in) + 2 Na(+)(in). It carries out the reaction taurodeoxycholate(out) + 2 Na(+)(out) = taurodeoxycholate(in) + 2 Na(+)(in). The catalysed reaction is tauroallocholate(out) + 2 Na(+)(out) = tauroallocholate(in) + 2 Na(+)(in). It catalyses the reaction taurohyodeoxycholate(out) + 2 Na(+)(out) = taurohyodeoxycholate(in) + 2 Na(+)(in). The enzyme catalyses taurohyocholate(out) + 2 Na(+)(out) = taurohyocholate(in) + 2 Na(+)(in). It carries out the reaction tauro-beta-muricholate(out) + 2 Na(+)(out) = tauro-beta-muricholate(in) + 2 Na(+)(in). Its activity is regulated as follows. The transport of bile acids is sodium-dependent. Its function is as follows. As a major transporter of conjugated bile salts from plasma into the hepatocyte, it plays a key role in the enterohepatic circulation of bile salts necessary for the solubilization and absorption of dietary fat and fat-soluble vitamins. It is strictly dependent on the extracellular presence of sodium. It exhibits broad substrate specificity and transports various bile acids, such as taurocholate, cholate, as well as non-bile acid organic compounds, such as estrone sulfate. Works collaboratively with the ileal transporter (NTCP2), the organic solute transporter (OST), and the bile salt export pump (BSEP), to ensure efficacious biological recycling of bile acids during enterohepatic circulation. In Rattus norvegicus (Rat), this protein is Hepatic sodium/bile acid cotransporter (Slc10a1).